The following is a 690-amino-acid chain: Elongation factor G (690 aa).

One can recognise a tr-type G domain in the interval 8 to 283; it reads EDYRNFGIMA…AVVDYLPSPL (276 aa). GTP-binding positions include 17 to 24, 81 to 85, and 135 to 138; these read AHIDAGKT, DTPGH, and NKMD.

Belongs to the TRAFAC class translation factor GTPase superfamily. Classic translation factor GTPase family. EF-G/EF-2 subfamily.

The protein resides in the cytoplasm. Its function is as follows. Catalyzes the GTP-dependent ribosomal translocation step during translation elongation. During this step, the ribosome changes from the pre-translocational (PRE) to the post-translocational (POST) state as the newly formed A-site-bound peptidyl-tRNA and P-site-bound deacylated tRNA move to the P and E sites, respectively. Catalyzes the coordinated movement of the two tRNA molecules, the mRNA and conformational changes in the ribosome. The chain is Elongation factor G from Rhodopseudomonas palustris (strain ATCC BAA-98 / CGA009).